Here is a 252-residue protein sequence, read N- to C-terminus: tRNA-cytidine(32) 2-sulfurtransferase (252 aa).

The short motif at 37–42 (SGGKDS) is the PP-loop motif element. [4Fe-4S] cluster contacts are provided by Cys112, Cys115, and Cys202.

This sequence belongs to the TtcA family. In terms of assembly, homodimer. Mg(2+) is required as a cofactor. The cofactor is [4Fe-4S] cluster.

It is found in the cytoplasm. It carries out the reaction cytidine(32) in tRNA + S-sulfanyl-L-cysteinyl-[cysteine desulfurase] + AH2 + ATP = 2-thiocytidine(32) in tRNA + L-cysteinyl-[cysteine desulfurase] + A + AMP + diphosphate + H(+). It functions in the pathway tRNA modification. In terms of biological role, catalyzes the ATP-dependent 2-thiolation of cytidine in position 32 of tRNA, to form 2-thiocytidine (s(2)C32). The sulfur atoms are provided by the cysteine/cysteine desulfurase (IscS) system. The chain is tRNA-cytidine(32) 2-sulfurtransferase from Geotalea uraniireducens (strain Rf4) (Geobacter uraniireducens).